The sequence spans 173 residues: Shikimate kinase 1 (173 aa).

Residue 14–19 (GAGKST) participates in ATP binding. Ser18 contributes to the Mg(2+) binding site. The substrate site is built by Asp36, Arg60, and Gly82. An ATP-binding site is contributed by Arg120. Substrate is bound at residue Arg140. Gln157 contributes to the ATP binding site.

Belongs to the shikimate kinase family. In terms of assembly, monomer. It depends on Mg(2+) as a cofactor.

Its subcellular location is the cytoplasm. It carries out the reaction shikimate + ATP = 3-phosphoshikimate + ADP + H(+). It participates in metabolic intermediate biosynthesis; chorismate biosynthesis; chorismate from D-erythrose 4-phosphate and phosphoenolpyruvate: step 5/7. Catalyzes the specific phosphorylation of the 3-hydroxyl group of shikimic acid using ATP as a cosubstrate. In Sodalis glossinidius (strain morsitans), this protein is Shikimate kinase 1.